The following is a 96-amino-acid chain: Protein TraA (96 aa).

The protein is Protein TraA (traA) of Escherichia coli.